Reading from the N-terminus, the 428-residue chain is 3-phosphoshikimate 1-carboxyvinyltransferase (428 aa).

3-phosphoshikimate-binding residues include Lys21, Ser22, and Arg26. Residue Lys21 coordinates phosphoenolpyruvate. Residues Gly94 and Arg122 each contribute to the phosphoenolpyruvate site. Positions 166, 167, 168, 194, 306, and 333 each coordinate 3-phosphoshikimate. Gln168 serves as a coordination point for phosphoenolpyruvate. Asp306 (proton acceptor) is an active-site residue. Positions 337, 379, and 405 each coordinate phosphoenolpyruvate.

It belongs to the EPSP synthase family. Monomer.

The protein resides in the cytoplasm. The enzyme catalyses 3-phosphoshikimate + phosphoenolpyruvate = 5-O-(1-carboxyvinyl)-3-phosphoshikimate + phosphate. It participates in metabolic intermediate biosynthesis; chorismate biosynthesis; chorismate from D-erythrose 4-phosphate and phosphoenolpyruvate: step 6/7. Functionally, catalyzes the transfer of the enolpyruvyl moiety of phosphoenolpyruvate (PEP) to the 5-hydroxyl of shikimate-3-phosphate (S3P) to produce enolpyruvyl shikimate-3-phosphate and inorganic phosphate. The chain is 3-phosphoshikimate 1-carboxyvinyltransferase from Clostridium acetobutylicum (strain ATCC 824 / DSM 792 / JCM 1419 / IAM 19013 / LMG 5710 / NBRC 13948 / NRRL B-527 / VKM B-1787 / 2291 / W).